The following is a 155-amino-acid chain: Large ribosomal subunit protein uL22 (155 aa).

The protein belongs to the universal ribosomal protein uL22 family. As to quaternary structure, part of the 50S ribosomal subunit.

Its function is as follows. This protein binds specifically to 23S rRNA. It makes multiple contacts with different domains of the 23S rRNA in the assembled 50S subunit and ribosome. Functionally, the globular domain of the protein is located near the polypeptide exit tunnel on the outside of the subunit, while an extended beta-hairpin is found that lines the wall of the exit tunnel in the center of the 70S ribosome. The sequence is that of Large ribosomal subunit protein uL22 from Pyrococcus horikoshii (strain ATCC 700860 / DSM 12428 / JCM 9974 / NBRC 100139 / OT-3).